The sequence spans 352 residues: UDP-N-acetylglucosamine--N-acetylmuramyl-(pentapeptide) pyrophosphoryl-undecaprenol N-acetylglucosamine transferase (352 aa).

UDP-N-acetyl-alpha-D-glucosamine is bound by residues Ser195 and Gln287.

This sequence belongs to the glycosyltransferase 28 family. MurG subfamily.

The protein resides in the cell membrane. It carries out the reaction Mur2Ac(oyl-L-Ala-gamma-D-Glu-L-Lys-D-Ala-D-Ala)-di-trans,octa-cis-undecaprenyl diphosphate + UDP-N-acetyl-alpha-D-glucosamine = beta-D-GlcNAc-(1-&gt;4)-Mur2Ac(oyl-L-Ala-gamma-D-Glu-L-Lys-D-Ala-D-Ala)-di-trans,octa-cis-undecaprenyl diphosphate + UDP + H(+). Its pathway is cell wall biogenesis; peptidoglycan biosynthesis. Its function is as follows. Cell wall formation. Catalyzes the transfer of a GlcNAc subunit on undecaprenyl-pyrophosphoryl-MurNAc-pentapeptide (lipid intermediate I) to form undecaprenyl-pyrophosphoryl-MurNAc-(pentapeptide)GlcNAc (lipid intermediate II). The chain is UDP-N-acetylglucosamine--N-acetylmuramyl-(pentapeptide) pyrophosphoryl-undecaprenol N-acetylglucosamine transferase from Streptococcus pneumoniae (strain 70585).